A 319-amino-acid polypeptide reads, in one-letter code: Putative antiporter CaxA (319 aa).

The next 10 helical transmembrane spans lie at 3 to 23, 38 to 58, 81 to 101, 105 to 125, 127 to 147, 175 to 195, 208 to 228, 250 to 270, 275 to 292, and 297 to 317; these read VATI…DRFV, MIIG…MVSA, ILLV…SMTI, FPLL…QSLT, AEGA…VYWG, VWLV…VHGA, LIGL…ASLI, ILAV…AAAA, YVMM…LRLG, and INRV…YLLF.

The protein belongs to the Ca(2+):cation antiporter (CaCA) (TC 2.A.19) family.

The protein localises to the cell membrane. In terms of biological role, confers modest Ca(2+) and Na(+) resistance. This chain is Putative antiporter CaxA (caxA), found in Alkalimonas amylolytica.